A 115-amino-acid chain; its full sequence is Tyrosine-protein phosphatase 22 (115 aa).

The Tyrosine-protein phosphatase domain maps to 1–115 (WLMIVEQKCR…ETGGDAPMVV (115 aa)). Aspartate 83 provides a ligand contact to substrate.

It belongs to the protein-tyrosine phosphatase family.

The enzyme catalyses O-phospho-L-tyrosyl-[protein] + H2O = L-tyrosyl-[protein] + phosphate. In Styela plicata (Wrinkled sea squirt), this protein is Tyrosine-protein phosphatase 22 (STY-22).